The sequence spans 976 residues: Probable outer membrane protein PmpA (976 aa).

Positions M1 to A50 are cleaved as a signal peptide. The Autotransporter domain maps to G671 to F976.

Belongs to the PMP outer membrane protein family.

Its subcellular location is the secreted. The protein localises to the cell wall. It is found in the cell outer membrane. The chain is Probable outer membrane protein PmpA (pmpA) from Chlamydia muridarum (strain MoPn / Nigg).